An 804-amino-acid chain; its full sequence is Leucine--tRNA ligase (804 aa).

A 'HIGH' region motif is present at residues 40 to 51 (PYPSGAGLHVGH). The 'KMSKS' region signature appears at 574-578 (KMSKS). Lysine 577 is a binding site for ATP.

The protein belongs to the class-I aminoacyl-tRNA synthetase family.

The protein localises to the cytoplasm. It catalyses the reaction tRNA(Leu) + L-leucine + ATP = L-leucyl-tRNA(Leu) + AMP + diphosphate. The chain is Leucine--tRNA ligase from Shouchella clausii (strain KSM-K16) (Alkalihalobacillus clausii).